Consider the following 368-residue polypeptide: Alanine racemase (368 aa).

Catalysis depends on Lys40, which acts as the Proton acceptor; specific for D-alanine. Lys40 is subject to N6-(pyridoxal phosphate)lysine. Arg134 contributes to the substrate binding site. The active-site Proton acceptor; specific for L-alanine is Tyr263. Met310 is a substrate binding site.

This sequence belongs to the alanine racemase family. It depends on pyridoxal 5'-phosphate as a cofactor.

The catalysed reaction is L-alanine = D-alanine. It functions in the pathway amino-acid biosynthesis; D-alanine biosynthesis; D-alanine from L-alanine: step 1/1. Its function is as follows. Catalyzes the interconversion of L-alanine and D-alanine. May also act on other amino acids. The chain is Alanine racemase (alr) from Listeria monocytogenes serotype 4b (strain F2365).